A 447-amino-acid polypeptide reads, in one-letter code: Probable asparagine--tRNA ligase, cytoplasmic (447 aa).

This sequence belongs to the class-II aminoacyl-tRNA synthetase family.

The protein localises to the cytoplasm. It carries out the reaction tRNA(Asn) + L-asparagine + ATP = L-asparaginyl-tRNA(Asn) + AMP + diphosphate + H(+). The protein is Probable asparagine--tRNA ligase, cytoplasmic of Vairimorpha ceranae (strain BRL01) (Microsporidian parasite).